A 480-amino-acid polypeptide reads, in one-letter code: DNA repair protein RadA (480 aa).

The C4-type zinc-finger motif lies at Cys-10–Cys-27. ATP is bound at residue Gly-95–Ser-102. The RadA KNRFG motif motif lies at Lys-254–Gly-258. A lon-protease-like region spans residues Asp-353 to Thr-480. The tract at residues Gly-459–Thr-480 is disordered. Positions Thr-461 to Gly-470 are enriched in polar residues.

It belongs to the RecA family. RadA subfamily.

Functionally, DNA-dependent ATPase involved in processing of recombination intermediates, plays a role in repairing DNA breaks. Stimulates the branch migration of RecA-mediated strand transfer reactions, allowing the 3' invading strand to extend heteroduplex DNA faster. Binds ssDNA in the presence of ADP but not other nucleotides, has ATPase activity that is stimulated by ssDNA and various branched DNA structures, but inhibited by SSB. Does not have RecA's homology-searching function. The polypeptide is DNA repair protein RadA (Mycobacterium tuberculosis (strain CDC 1551 / Oshkosh)).